We begin with the raw amino-acid sequence, 1073 residues long: PX domain-containing protein LEC1 (1073 aa).

Positions 218 to 228 (CTESVDNDKSS) are enriched in basic and acidic residues. Positions 218–240 (CTESVDNDKSSKSTPTSSPKSHA) are disordered. Residues 229 to 238 (KSTPTSSPKS) are compositionally biased toward low complexity. The 234-residue stretch at 273–506 (LFSKLSLGVP…RFFLSGPNLD (234 aa)) folds into the PX domain. Phosphoserine is present on residues Ser310 and Ser451. A disordered region spans residues 431–456 (IKEEDNIDEDEYEEEGEGEESDFDEY). Residues 432-453 (KEEDNIDEDEYEEEGEGEESDF) show a composition bias toward acidic residues.

It is found in the endoplasmic reticulum membrane. The protein resides in the lipid droplet. Its function is as follows. Phosphoinositide-binding protein that plays a role in regulation of ergosterol distribution in the cell. Facilitates ergosterol transport between plasma membrane and lipid droplets. The chain is PX domain-containing protein LEC1 from Saccharomyces cerevisiae (strain ATCC 204508 / S288c) (Baker's yeast).